Reading from the N-terminus, the 237-residue chain is Pyridoxine 5'-phosphate synthase (237 aa).

The 3-amino-2-oxopropyl phosphate site is built by Asn7 and Arg18. The active-site Proton acceptor is His43. The 1-deoxy-D-xylulose 5-phosphate site is built by Arg45 and His50. Glu70 (proton acceptor) is an active-site residue. Thr100 is a 1-deoxy-D-xylulose 5-phosphate binding site. His190 functions as the Proton donor in the catalytic mechanism. 3-amino-2-oxopropyl phosphate contacts are provided by residues Asp191 and 213-214 (GH).

The protein belongs to the PNP synthase family. In terms of assembly, homooctamer; tetramer of dimers.

The protein resides in the cytoplasm. The catalysed reaction is 3-amino-2-oxopropyl phosphate + 1-deoxy-D-xylulose 5-phosphate = pyridoxine 5'-phosphate + phosphate + 2 H2O + H(+). The protein operates within cofactor biosynthesis; pyridoxine 5'-phosphate biosynthesis; pyridoxine 5'-phosphate from D-erythrose 4-phosphate: step 5/5. Functionally, catalyzes the complicated ring closure reaction between the two acyclic compounds 1-deoxy-D-xylulose-5-phosphate (DXP) and 3-amino-2-oxopropyl phosphate (1-amino-acetone-3-phosphate or AAP) to form pyridoxine 5'-phosphate (PNP) and inorganic phosphate. In Christiangramia forsetii (strain DSM 17595 / CGMCC 1.15422 / KT0803) (Gramella forsetii), this protein is Pyridoxine 5'-phosphate synthase.